The chain runs to 266 residues: Type III pantothenate kinase (266 aa).

Residue 6-13 (DAGNTNIV) participates in ATP binding. Residue 107–110 (GADR) participates in substrate binding. Asp109 functions as the Proton acceptor in the catalytic mechanism. Asp129 contributes to the K(+) binding site. Thr132 is a binding site for ATP. Thr184 is a binding site for substrate.

The protein belongs to the type III pantothenate kinase family. Homodimer. It depends on NH4(+) as a cofactor. The cofactor is K(+).

Its subcellular location is the cytoplasm. The catalysed reaction is (R)-pantothenate + ATP = (R)-4'-phosphopantothenate + ADP + H(+). The protein operates within cofactor biosynthesis; coenzyme A biosynthesis; CoA from (R)-pantothenate: step 1/5. Functionally, catalyzes the phosphorylation of pantothenate (Pan), the first step in CoA biosynthesis. The chain is Type III pantothenate kinase from Acidiphilium cryptum (strain JF-5).